The sequence spans 503 residues: Xylan O-acetyltransferase 12 (503 aa).

Topologically, residues Met-1–Pro-54 are cytoplasmic. Residues Leu-55–Leu-77 traverse the membrane as a helical; Signal-anchor for type II membrane protein segment. Over Phe-78–Lys-503 the chain is Lumenal. Intrachain disulfides connect Cys-153–Cys-204, Cys-175–Cys-240, Cys-184–Cys-484, and Cys-400–Cys-480. N-linked (GlcNAc...) asparagine glycosylation is found at Asn-154, Asn-164, Asn-190, and Asn-210. The GDS motif signature appears at Gly-227–Ser-229. Residue Ser-229 is the Nucleophile of the active site. N-linked (GlcNAc...) asparagine glycans are attached at residues Asn-256, Asn-268, Asn-373, Asn-402, and Asn-443. Catalysis depends on Asp-479, which acts as the Proton donor. Residues Asp-479–His-482 carry the DXXH motif motif. Catalysis depends on His-482, which acts as the Proton acceptor.

This sequence belongs to the PC-esterase family. TBL subfamily.

It localises to the golgi apparatus membrane. In terms of biological role, xylan acetyltransferase required for 2-O- and 3-O-monoacetylation of xylosyl residues in xylan. Catalyzes the 2-O-acetylation of xylan, followed by nonenzymatic acetyl migration to the O-3 position, resulting in products that are monoacetylated at both O-2 and O-3 positions. The polypeptide is Xylan O-acetyltransferase 12 (Oryza sativa subsp. japonica (Rice)).